A 586-amino-acid chain; its full sequence is Arginine--tRNA ligase (586 aa).

The 'HIGH' region signature appears at 133-143; the sequence is ANPTGPLNIVS.

Belongs to the class-I aminoacyl-tRNA synthetase family. As to quaternary structure, monomer.

Its subcellular location is the cytoplasm. It catalyses the reaction tRNA(Arg) + L-arginine + ATP = L-arginyl-tRNA(Arg) + AMP + diphosphate. The chain is Arginine--tRNA ligase from Leptospira interrogans serogroup Icterohaemorrhagiae serovar copenhageni (strain Fiocruz L1-130).